The following is a 235-amino-acid chain: Claudin-16 (235 aa).

Over 1–3 (MRD) the chain is Cytoplasmic. Residues 4–24 (LLQYIACFFAFFSAGFLIVAT) form a helical membrane-spanning segment. Over 25-79 (WTDCWMVNADDSLEVSTKCRGLWWECVTNAFDGIRTCDEYDSILAEHPLKLVVTR) the chain is Extracellular. The helical transmembrane segment at 80–100 (ALMITADILAGFGFLTLLLGL) threads the bilayer. The Cytoplasmic portion of the chain corresponds to 101–115 (DCVKFLPDEPYIKVR). The chain crosses the membrane as a helical span at residues 116 to 136 (ICFVAGATLLIAGTPGIIGSV). Residues 137 to 169 (WYAVDVYVERSTLVLHNIFLGIQYKFGWSCWLG) lie on the Extracellular side of the membrane. A helical transmembrane segment spans residues 170 to 190 (MAGSLGCFLAGAVLTCCLYLF). At 191 to 235 (KDVGPERNYPYSLRKAYSAAGVSMAKSYSAPRTETAKMYAVDTRV) the chain is on the cytoplasmic side. The Interaction with TJP1 motif lies at 233 to 235 (TRV).

This sequence belongs to the claudin family. Can form heteropolymeric tight junction strands with other claudins. Interacts with CLDN19. Interacts (via PDZ-binding motif TRV) with TJP1 (via PDZ domain). Cannot form tight junction strands on its own. As to expression, kidney-specific, including the thick ascending limb of Henle (TAL).

Its subcellular location is the cell junction. The protein resides in the tight junction. It localises to the cell membrane. It carries out the reaction Mg(2+)(in) = Mg(2+)(out). The catalysed reaction is Ca(2+)(in) = Ca(2+)(out). The enzyme catalyses Na(+)(in) = Na(+)(out). It catalyses the reaction K(+)(in) = K(+)(out). It carries out the reaction Rb(+)(in) = Rb(+)(out). The catalysed reaction is Cs(+)(in) = Cs(+)(out). The enzyme catalyses Li(+)(in) = Li(+)(out). Forms paracellular channels: coassembles with CLDN19 into tight junction strands with cation-selective channels through the strands, conveying epithelial permeability in a process known as paracellular tight junction permeability. Involved in the maintenance of ion gradients along the nephron. In the thick ascending limb (TAL) of Henle's loop, facilitates sodium paracellular permeability from the interstitial compartment to the lumen, contributing to the lumen-positive transepithelial potential that drives paracellular magnesium and calcium reabsorption. This Homo sapiens (Human) protein is Claudin-16.